The primary structure comprises 591 residues: 2-succinyl-5-enolpyruvyl-6-hydroxy-3-cyclohexene-1-carboxylate synthase (591 aa).

The protein belongs to the TPP enzyme family. MenD subfamily. Homodimer. Requires Mg(2+) as cofactor. Mn(2+) serves as cofactor. The cofactor is thiamine diphosphate.

The catalysed reaction is isochorismate + 2-oxoglutarate + H(+) = 5-enolpyruvoyl-6-hydroxy-2-succinyl-cyclohex-3-ene-1-carboxylate + CO2. The protein operates within quinol/quinone metabolism; 1,4-dihydroxy-2-naphthoate biosynthesis; 1,4-dihydroxy-2-naphthoate from chorismate: step 2/7. Its pathway is cofactor biosynthesis; phylloquinone biosynthesis. Functionally, catalyzes the thiamine diphosphate-dependent decarboxylation of 2-oxoglutarate and the subsequent addition of the resulting succinic semialdehyde-thiamine pyrophosphate anion to isochorismate to yield 2-succinyl-5-enolpyruvyl-6-hydroxy-3-cyclohexene-1-carboxylate (SEPHCHC). In Rippkaea orientalis (strain PCC 8801 / RF-1) (Cyanothece sp. (strain PCC 8801)), this protein is 2-succinyl-5-enolpyruvyl-6-hydroxy-3-cyclohexene-1-carboxylate synthase.